The sequence spans 38 residues: Glutathione S-transferase 2 (38 aa).

The protein belongs to the GST superfamily. Phi family.

It catalyses the reaction RX + glutathione = an S-substituted glutathione + a halide anion + H(+). Conjugation of reduced glutathione to a wide number of exogenous and endogenous hydrophobic electrophiles. In plants, may have a detoxification role against certain herbicides. The polypeptide is Glutathione S-transferase 2 (Populus euphratica (Euphrates poplar)).